The sequence spans 639 residues: Envelope glycoprotein (639 aa).

Residues 1–34 (MESPTHPKPSKDKTFPWNLVFLVGILFQIDMGMA) form the signal peptide. Over 35–583 (NPSPHQVYNV…FNKSPWFTTL (549 aa)) the chain is Extracellular. Residues N43 and N58 are each glycosylated (N-linked (GlcNAc...) asparagine; by host). Cystine bridges form between C122–C144 and C136–C149. Positions 232–278 (QAMGPNLVLPDQKPPSRQSQTKSKVTTQRPQITSSTPRSVASATMGP) are disordered. Residues 246–273 (PSRQSQTKSKVTTQRPQITSSTPRSVAS) are compositionally biased toward polar residues. Residues N299 and N304 are each glycosylated (N-linked (GlcNAc...) asparagine; by host). 3 disulfide bridges follow: C309-C312, C309-C536, and C528-C535. Residues 309–312 (CWLC) carry the CXXC motif. N-linked (GlcNAc...) asparagine; by host glycosylation is found at N328, N331, N387, and N407. The tract at residues 445–465 (ISLTVALMLGGLTVGGIAAGV) is fusion peptide. Coiled-coil stretches lie at residues 473-522 (LETA…ILFL) and 532-568 (KEEC…SQQG). The immunosuppression stretch occupies residues 511–527 (LQNRRGLDILFLQEGGL). A CX6CC motif is present at residues 528 to 536 (CAALKEECC). A helical membrane pass occupies residues 584 to 604 (ISSIMGPLLILLLILLLGPCI). A lipid anchor (S-palmitoyl cysteine; by host) is attached at C603. Topologically, residues 605–639 (LNRLVQFVKDRISVVQALILTQQYQQIQQYDSDRP) are cytoplasmic.

In terms of assembly, the mature envelope protein (Env) consists of a trimer of SU-TM heterodimers attached by a labile interchain disulfide bond. Specific enzymatic cleavages in vivo yield mature proteins. Envelope glycoproteins are synthesized as an inactive precursor that is N-glycosylated and processed likely by host cell furin or by a furin-like protease in the Golgi to yield the mature SU and TM proteins. The cleavage site between SU and TM requires the minimal sequence [KR]-X-[KR]-R. The R-peptide is released from the C-terminus of the cytoplasmic tail of the TM protein upon particle formation as a result of proteolytic cleavage by the viral protease. Cleavage of this peptide is required for TM to become fusogenic. In terms of processing, the CXXC motif is highly conserved across a broad range of retroviral envelope proteins. It is thought to participate in the formation of a labile disulfide bond possibly with the CX6CC motif present in the transmembrane protein. Isomerization of the intersubunit disulfide bond to an SU intrachain disulfide bond is thought to occur upon receptor recognition in order to allow membrane fusion. Post-translationally, the transmembrane protein is palmitoylated. The R-peptide is palmitoylated.

The protein resides in the virion membrane. It is found in the host cell membrane. Functionally, the surface protein (SU) attaches the virus to the host cell by binding to its receptor. This interaction triggers the refolding of the transmembrane protein (TM) and is thought to activate its fusogenic potential by unmasking its fusion peptide. Fusion occurs at the host cell plasma membrane. The transmembrane protein (TM) acts as a class I viral fusion protein. Under the current model, the protein has at least 3 conformational states: pre-fusion native state, pre-hairpin intermediate state, and post-fusion hairpin state. During viral and target cell membrane fusion, the coiled coil regions (heptad repeats) assume a trimer-of-hairpins structure, positioning the fusion peptide in close proximity to the C-terminal region of the ectodomain. The formation of this structure appears to drive apposition and subsequent fusion of viral and target cell membranes. Membranes fusion leads to delivery of the nucleocapsid into the cytoplasm. This chain is Envelope glycoprotein (env), found in Feline leukemia virus (strain C/Sarma).